The sequence spans 1137 residues: Isoleucine--tRNA ligase (1137 aa).

The 'HIGH' region motif lies at 50–60 (PSANGMPGIHH). The short motif at 688 to 692 (KMSKR) is the 'KMSKS' region element. Position 691 (lysine 691) interacts with ATP.

The protein belongs to the class-I aminoacyl-tRNA synthetase family. IleS type 2 subfamily. In terms of assembly, monomer. Zn(2+) serves as cofactor.

It localises to the cytoplasm. It catalyses the reaction tRNA(Ile) + L-isoleucine + ATP = L-isoleucyl-tRNA(Ile) + AMP + diphosphate. Functionally, catalyzes the attachment of isoleucine to tRNA(Ile). As IleRS can inadvertently accommodate and process structurally similar amino acids such as valine, to avoid such errors it has two additional distinct tRNA(Ile)-dependent editing activities. One activity is designated as 'pretransfer' editing and involves the hydrolysis of activated Val-AMP. The other activity is designated 'posttransfer' editing and involves deacylation of mischarged Val-tRNA(Ile). The sequence is that of Isoleucine--tRNA ligase from Porphyromonas gingivalis (strain ATCC BAA-308 / W83).